The sequence spans 291 residues: Tyramine--L-glutamate ligase (291 aa).

One can recognise an ATP-grasp domain in the interval 104–274 (KYPVKNLGCS…LAELLIKNAN (171 aa)). 131 to 176 (KDYVKTPKTFKPKKYVIKKIDGCGGKFNLFDENFLIQEFVEGESLS) serves as a coordination point for ATP. Mg(2+) is bound by residues Asp236, Glu247, and Asn249. Mn(2+) contacts are provided by Asp236, Glu247, and Asn249.

Mg(2+) serves as cofactor. It depends on Mn(2+) as a cofactor.

It carries out the reaction tyramine + L-glutamate + ATP = gamma-L-glutamyltyramine + ADP + phosphate + H(+). The protein operates within cofactor biosynthesis; methanofuran biosynthesis. Its function is as follows. Catalyzes the formation of an amide bond between tyramine and the gamma carboxy group of L-glutamate. The enzyme also accepts phenylethylamine in vitro. This Methanocaldococcus fervens (strain DSM 4213 / JCM 15782 / AG86) (Methanococcus fervens) protein is Tyramine--L-glutamate ligase.